Reading from the N-terminus, the 260-residue chain is UPF0246 protein Veis_4789 (260 aa).

It belongs to the UPF0246 family.

This chain is UPF0246 protein Veis_4789, found in Verminephrobacter eiseniae (strain EF01-2).